Here is a 414-residue protein sequence, read N- to C-terminus: Glycogen synthase (414 aa).

The protein belongs to the glycosyltransferase group 1 family.

It catalyses the reaction [(1-&gt;4)-alpha-D-glucosyl](n) + UDP-alpha-D-glucose = [(1-&gt;4)-alpha-D-glucosyl](n+1) + UDP + H(+). Its pathway is glycan biosynthesis; glycogen biosynthesis. Its function is as follows. Glucosyltransferase that uses UDP-glucose as the sugar donor to elongate alpha-(1-&gt;4)-glucans. Is involved in the biosynthesis of both 6-O-methylglucosyl lipopolysaccharides (MGLP) and glycogen. May also use ADP-glucose as substrate. In Mycobacterium tuberculosis (strain CDC 1551 / Oshkosh), this protein is Glycogen synthase.